Reading from the N-terminus, the 339-residue chain is MNIQQAIKQIIKKQDLSENEMHKVMNDIMTGKTTDAQIGGFLVGLAIKGESVDEITAAAKTMRSLVKSVTIKNTKHLVDTCGTGGDGLGLFNISTACTFVVAAAGGSVAKHGNSSISSKSGSADVLKAAGVNLDMSVEKISKCIEKIGIGFMFAPFHHIAMKHVIEPRKDLAIKTIFNVLGPLTNPAKVPNQVMGVYAQSLVEPIAYVLKNLGSKHVIVVHSKDGLDEISIADDTFVAELKNGQVSTYTINPADFSLPLGNLNDIKANNADYSLVLIQQALDGKDGVAKNIIALNSGAAIYVCGLANSLQKGVNKALNILNSDVAHQKLDDFVRESTDC.

5-phospho-alpha-D-ribose 1-diphosphate contacts are provided by residues glycine 82, 85–86 (GD), 92–95 (NIST), 110–118 (KHGNSSISS), and serine 122. Glycine 82 is a binding site for anthranilate. Mg(2+) is bound at residue serine 94. Asparagine 113 provides a ligand contact to anthranilate. Anthranilate is bound at residue arginine 168. Mg(2+) is bound by residues aspartate 227 and glutamate 228.

It belongs to the anthranilate phosphoribosyltransferase family. In terms of assembly, homodimer. Requires Mg(2+) as cofactor.

The catalysed reaction is N-(5-phospho-beta-D-ribosyl)anthranilate + diphosphate = 5-phospho-alpha-D-ribose 1-diphosphate + anthranilate. It participates in amino-acid biosynthesis; L-tryptophan biosynthesis; L-tryptophan from chorismate: step 2/5. Functionally, catalyzes the transfer of the phosphoribosyl group of 5-phosphorylribose-1-pyrophosphate (PRPP) to anthranilate to yield N-(5'-phosphoribosyl)-anthranilate (PRA). This Ruthia magnifica subsp. Calyptogena magnifica protein is Anthranilate phosphoribosyltransferase.